The primary structure comprises 252 residues: 5'-nucleotidase SurE (252 aa).

A divalent metal cation is bound by residues Asp-8, Asp-9, Ser-39, and Asn-91.

Belongs to the SurE nucleotidase family. A divalent metal cation serves as cofactor.

The protein localises to the cytoplasm. It carries out the reaction a ribonucleoside 5'-phosphate + H2O = a ribonucleoside + phosphate. Nucleotidase that shows phosphatase activity on nucleoside 5'-monophosphates. The polypeptide is 5'-nucleotidase SurE (Legionella pneumophila (strain Paris)).